The primary structure comprises 395 residues: Succinyl-diaminopimelate desuccinylase (395 aa).

H74 is a Zn(2+) binding site. The active site involves D76. D107 is a Zn(2+) binding site. Catalysis depends on E141, which acts as the Proton acceptor. Zn(2+) contacts are provided by E142, E170, and H368.

The protein belongs to the peptidase M20A family. DapE subfamily. In terms of assembly, homodimer. Requires Zn(2+) as cofactor. Co(2+) is required as a cofactor.

It carries out the reaction N-succinyl-(2S,6S)-2,6-diaminopimelate + H2O = (2S,6S)-2,6-diaminopimelate + succinate. It participates in amino-acid biosynthesis; L-lysine biosynthesis via DAP pathway; LL-2,6-diaminopimelate from (S)-tetrahydrodipicolinate (succinylase route): step 3/3. In terms of biological role, catalyzes the hydrolysis of N-succinyl-L,L-diaminopimelic acid (SDAP), forming succinate and LL-2,6-diaminopimelate (DAP), an intermediate involved in the bacterial biosynthesis of lysine and meso-diaminopimelic acid, an essential component of bacterial cell walls. This chain is Succinyl-diaminopimelate desuccinylase, found in Brucella abortus (strain S19).